A 338-amino-acid polypeptide reads, in one-letter code: tRNA dimethylallyltransferase (338 aa).

13 to 20 (GPTASGKT) lines the ATP pocket. 15-20 (TASGKT) contacts substrate. 2 interaction with substrate tRNA regions span residues 38 to 41 (DSTL) and 162 to 166 (QRVSR).

Belongs to the IPP transferase family. In terms of assembly, monomer. Requires Mg(2+) as cofactor.

It catalyses the reaction adenosine(37) in tRNA + dimethylallyl diphosphate = N(6)-dimethylallyladenosine(37) in tRNA + diphosphate. In terms of biological role, catalyzes the transfer of a dimethylallyl group onto the adenine at position 37 in tRNAs that read codons beginning with uridine, leading to the formation of N6-(dimethylallyl)adenosine (i(6)A). This Cellvibrio japonicus (strain Ueda107) (Pseudomonas fluorescens subsp. cellulosa) protein is tRNA dimethylallyltransferase.